The following is a 282-amino-acid chain: 3-methyl-2-oxobutanoate hydroxymethyltransferase (282 aa).

Positions 44 and 83 each coordinate Mg(2+). 3-methyl-2-oxobutanoate-binding positions include 44-45, Asp-83, and Lys-113; that span reads DS. Glu-115 lines the Mg(2+) pocket. Glu-182 (proton acceptor) is an active-site residue.

Belongs to the PanB family. Homodecamer; pentamer of dimers. It depends on Mg(2+) as a cofactor.

The protein resides in the cytoplasm. The catalysed reaction is 3-methyl-2-oxobutanoate + (6R)-5,10-methylene-5,6,7,8-tetrahydrofolate + H2O = 2-dehydropantoate + (6S)-5,6,7,8-tetrahydrofolate. Its pathway is cofactor biosynthesis; (R)-pantothenate biosynthesis; (R)-pantoate from 3-methyl-2-oxobutanoate: step 1/2. In terms of biological role, catalyzes the reversible reaction in which hydroxymethyl group from 5,10-methylenetetrahydrofolate is transferred onto alpha-ketoisovalerate to form ketopantoate. The chain is 3-methyl-2-oxobutanoate hydroxymethyltransferase from Dehalococcoides mccartyi (strain ATCC BAA-2266 / KCTC 15142 / 195) (Dehalococcoides ethenogenes (strain 195)).